The following is a 147-amino-acid chain: Hemoglobin anodic subunit beta (147 aa).

The Globin domain occupies 2–147 (EWTDGERTAI…VTSALARQYH (146 aa)). Heme b-binding residues include His63 and His92.

This sequence belongs to the globin family. In terms of assembly, heterotetramer of two alpha chains and two beta chains. In terms of tissue distribution, red blood cells.

Involved in oxygen transport from gills to the various peripheral tissues. The protein is Hemoglobin anodic subunit beta of Gymnothorax unicolor (Brown moray).